A 371-amino-acid polypeptide reads, in one-letter code: LIM domain-binding protein 2 (371 aa).

2 disordered regions span residues 244 to 289 and 325 to 371; these read APPA…AAAN and QYDA…QASQ. Residues 263–289 show a composition bias toward low complexity; the sequence is STSSTSNSSAGNNANSTNSKKKSAAAN. The LIM interaction domain (LID) domain occupies 296-335; that stretch reads DVMVVGEPTLMGGEFGDEDERLITRLENTQYDAANGMDDE. The span at 339–371 shows a compositional bias: polar residues; the sequence is NNSPALGNNSPWNSKPPANQETKSENPTPQASQ.

The protein belongs to the LDB family. First expressed at stages 15-16 in presumptive limb mesoderm. As limb outgrowth proceeds, expressed in the entire limb bud, concentrating in the distal mesoderm throughout limb development. Both hindlimbs and forelimbs exhibit similar expression patterns.

The protein localises to the nucleus. Binds to the LIM domain of a wide variety of LIM domain-containing transcription factors. This chain is LIM domain-binding protein 2 (LDB2), found in Gallus gallus (Chicken).